A 323-amino-acid chain; its full sequence is Mycothiol acetyltransferase (323 aa).

2 N-acetyltransferase domains span residues 21–176 (ELLR…VSLR) and 173–323 (VSLR…LTKN). E44 provides a ligand contact to 1D-myo-inositol 2-(L-cysteinylamino)-2-deoxy-alpha-D-glucopyranoside. 98 to 100 (LAV) provides a ligand contact to acetyl-CoA. Residues E200, K240, and E253 each coordinate 1D-myo-inositol 2-(L-cysteinylamino)-2-deoxy-alpha-D-glucopyranoside. Residues 257-259 (VGV) and 264-270 (QGLGLGK) each bind acetyl-CoA. Position 291 (Y291) interacts with 1D-myo-inositol 2-(L-cysteinylamino)-2-deoxy-alpha-D-glucopyranoside.

Belongs to the acetyltransferase family. MshD subfamily. Monomer.

The enzyme catalyses 1D-myo-inositol 2-(L-cysteinylamino)-2-deoxy-alpha-D-glucopyranoside + acetyl-CoA = mycothiol + CoA + H(+). Catalyzes the transfer of acetyl from acetyl-CoA to desacetylmycothiol (Cys-GlcN-Ins) to form mycothiol. This Paenarthrobacter aurescens (strain TC1) protein is Mycothiol acetyltransferase.